The sequence spans 145 residues: Glutaconyl-CoA decarboxylase subunit gamma (145 aa).

The segment at 52-82 is disordered; the sequence is APAPAAAPAAAPAPAAKPAAAAPAGSVTVSA. The segment covering 57-75 has biased composition (low complexity); sequence AAPAAAPAPAAKPAAAAPA. The Biotinyl-binding domain occupies 77–145; sequence SVTVSAPMPG…VATGDVMVIL (69 aa). Lysine 112 carries the post-translational modification N6-biotinyllysine.

In terms of assembly, heterooctamer consisting of two alpha, two beta, two gamma and two delta subunits. Biotin is required as a cofactor.

It carries out the reaction (2E)-glutaconyl-CoA + Na(+)(in) + H(+) = (2E)-butenoyl-CoA + Na(+)(out) + CO2. It participates in amino-acid degradation; L-glutamate degradation via hydroxyglutarate pathway; crotonoyl-CoA from L-glutamate: step 5/5. Its function is as follows. Biotin carrier subunit of the primary sodium pump glutaconyl-CoA decarboxylase (GCD). This Acidaminococcus fermentans (strain ATCC 25085 / DSM 20731 / CCUG 9996 / CIP 106432 / VR4) protein is Glutaconyl-CoA decarboxylase subunit gamma (gcdC).